The primary structure comprises 208 residues: Transmembrane protein 222 (208 aa).

The disordered stretch occupies residues methionine 1–alanine 26. Residues methionine 1–cysteine 55 lie on the Extracellular side of the membrane. Residues valine 56–isoleucine 76 traverse the membrane as a helical segment. Topologically, residues cysteine 77–asparagine 164 are cytoplasmic. A helical transmembrane segment spans residues methionine 165 to valine 185. Lysine 186 is a topological domain (extracellular). A helical transmembrane segment spans residues threonine 187 to leucine 207. Arginine 208 is a topological domain (cytoplasmic).

As to expression, widely expressed. The highest expression is observed in the brain.

The protein resides in the membrane. It is found in the cell projection. It localises to the dendrite. The polypeptide is Transmembrane protein 222 (TMEM222) (Homo sapiens (Human)).